Reading from the N-terminus, the 837-residue chain is MSLSHLYRDGEGHMDDDEDERENFEITDWDLQNEFNPNRQRHWQTKEEATYGVWAERDSDEERPSFGGKRARDYSAPVNFISAGLKKGAAEEAELEDSDDEEKPVKQDEFPKDFGPKKLKTGGNFKPSQKGFAGGTKSFMDFGSWERHTKGIGQKLLQKMGYVPGRGLGKNAQGIINPIEAKQRKGKGAVGAYGSERTTQSLQDFPVVDSEEEAEEEFQKELSQWRKDPSGSKKKPKYSYKTVEELKAKGRISKKLTAPQKELSQVKVIDMTGREQKVYYSYSQISHKHSVPDDGLPPQAQPPPPPGKEARAPGFALPELEHNLQLLIELTEQEIIRNDRQLQYERDVVVNLTHELEKASGALQQEQRAIASLSEVLALVEECERRLQPGCSDPLTLDECARVFQTLRDKYYEEYRMSDRVDLAVAIVYPLMKDYFKEWDPLKDCTYGTETISQWKSLLENDQLLSHGGQDLSADAFHRLIWEVWMPFVRSIVAQWQPRNCDPMVDFLDSWAPLIPVWVLDNILEQLIFPKLQKEVESWNPLTDTVPIHSWVHPWLPLMQARLEPLYSPIRSKLASALQKWHPSDSSAKLILQPWKDVFTPGSWEAFMVKNIVPKLGMCLGELVINPHQQHMDAFYWVIDWEGMVSVSSLVGLLEKHFFPKWLQVLCSWLSNSPNYEEITKWYLGWKSMFSDQVLAHPSVKDKFNEALDIMNRAVSSNVGAYMQPGAREHIAYLTHTERRKDFQYEAMQERREAENMAQRGIGVAASAVPMNFKDLIETKAEEHNIVFMPVIGKRHEGKQLYTFGRIVIYIDRGVVFVQGEKTWVPTSLQSLIDMAK.

Over residues 1 to 13 (MSLSHLYRDGEGH) the composition is skewed to basic and acidic residues. Disordered regions lie at residues 1-31 (MSLS…DWDL), 54-73 (WAER…RARD), and 85-136 (LKKG…AGGT). The required for interaction with DHX15 stretch occupies residues 1-50 (MSLSHLYRDGEGHMDDDEDERENFEITDWDLQNEFNPNRQRHWQTKEEAT). Residue S2 is modified to Phosphoserine. Residues 14-28 (MDDDEDERENFEITD) show a composition bias toward acidic residues. The span at 54 to 64 (WAERDSDEERP) shows a compositional bias: basic and acidic residues. S59 and S98 each carry phosphoserine. The segment covering 91–102 (EEAELEDSDDEE) has biased composition (acidic residues). Over residues 103–116 (KPVKQDEFPKDFGP) the composition is skewed to basic and acidic residues. Position 144 is a phosphoserine (S144). Positions 149–195 (TKGIGQKLLQKMGYVPGRGLGKNAQGIINPIEAKQRKGKGAVGAYGS) constitute a G-patch domain. 2 disordered regions span residues 183-236 (QRKG…KKKP) and 287-313 (HKHS…ARAP). S210 carries the phosphoserine modification. Positions 217 to 231 (EFQKELSQWRKDPSG) are enriched in basic and acidic residues. The Nuclear localization signal signature appears at 700-705 (VKDKFN). A required for nuclear speckle localization region spans residues 710-734 (IMNRAVSSNVGAYMQPGAREHIAYL).

It belongs to the TFP11/STIP family. In terms of assembly, identified in the spliceosome C complex. Found in the Intron Large (IL) complex, a post-mRNA release spliceosomal complex containing the excised intron, U2, U5 and U6 snRNPs, and splicing factors. Interacts with TUFT1. Interacts with DHX15; indicative for a recruitment of DHX15 to the IL complex. Interacts with GCFC2.

It localises to the cytoplasm. The protein resides in the nucleus. Involved in pre-mRNA splicing, specifically in spliceosome disassembly during late-stage splicing events. Intron turnover seems to proceed through reactions in two lariat-intron associated complexes termed Intron Large (IL) and Intron Small (IS). In cooperation with DHX15 seems to mediate the transition of the U2, U5 and U6 snRNP-containing IL complex to the snRNP-free IS complex leading to efficient debranching and turnover of excised introns. May play a role in the differentiation of ameloblasts and odontoblasts or in the forming of the enamel extracellular matrix. The chain is Tuftelin-interacting protein 11 (TFIP11) from Bos taurus (Bovine).